Reading from the N-terminus, the 119-residue chain is MARVKRGVQARRRHKKILTLAKGYYNARRKVFRVAKQAVIKAQQYAYIGRKQKKRNFRSLWITRINAAARINGLSYSRFMNGMLKAGITLDRKVLADIAVHDAAGFAALAEKAKGALAA.

It belongs to the bacterial ribosomal protein bL20 family.

Its function is as follows. Binds directly to 23S ribosomal RNA and is necessary for the in vitro assembly process of the 50S ribosomal subunit. It is not involved in the protein synthesizing functions of that subunit. This chain is Large ribosomal subunit protein bL20, found in Xanthomonas campestris pv. campestris (strain 8004).